An 89-amino-acid polypeptide reads, in one-letter code: MSLSSERKVQVIKEHQCSVNDTGSPEVQVALLSERITQLSGHFKQHTHDHHSRQGLLRAVGQRRKLLDYLKKKDLDRYRTLINKLGLRR.

The protein belongs to the universal ribosomal protein uS15 family. Part of the 30S ribosomal subunit. Forms a bridge to the 50S subunit in the 70S ribosome, contacting the 23S rRNA.

Functionally, one of the primary rRNA binding proteins, it binds directly to 16S rRNA where it helps nucleate assembly of the platform of the 30S subunit by binding and bridging several RNA helices of the 16S rRNA. In terms of biological role, forms an intersubunit bridge (bridge B4) with the 23S rRNA of the 50S subunit in the ribosome. The chain is Small ribosomal subunit protein uS15 from Nitrosococcus oceani (strain ATCC 19707 / BCRC 17464 / JCM 30415 / NCIMB 11848 / C-107).